Reading from the N-terminus, the 279-residue chain is HTH-type transcriptional regulator HdfR (279 aa).

The 58-residue stretch at 1 to 58 folds into the HTH lysR-type domain; that stretch reads MDTELLKTFLEVSRTRHFGRAAESLYLTQSAVSFRIRQLENQLGVNLFTRHRNNIRLT. The segment at residues 18–37 is a DNA-binding region (H-T-H motif); the sequence is FGRAAESLYLTQSAVSFRIR.

Belongs to the LysR transcriptional regulatory family.

Its function is as follows. Negatively regulates the transcription of the flagellar master operon flhDC by binding to the upstream region of the operon. The chain is HTH-type transcriptional regulator HdfR from Escherichia coli O17:K52:H18 (strain UMN026 / ExPEC).